Reading from the N-terminus, the 488-residue chain is Glutamate synthase [NADPH] small chain (488 aa).

The 4Fe-4S ferredoxin-type domain occupies 38–69; it reads ESLRQQATRCMDCGIPFCHNGCPLGNLIPEWN.

Requires [4Fe-4S] cluster as cofactor.

The enzyme catalyses 2 L-glutamate + NADP(+) = L-glutamine + 2-oxoglutarate + NADPH + H(+). The protein operates within amino-acid biosynthesis; L-glutamate biosynthesis via GLT pathway; L-glutamate from 2-oxoglutarate and L-glutamine (NADP(+) route): step 1/1. The polypeptide is Glutamate synthase [NADPH] small chain (gltD) (Mycobacterium tuberculosis (strain CDC 1551 / Oshkosh)).